Reading from the N-terminus, the 260-residue chain is Adenosylcobinamide-GDP ribazoletransferase (260 aa).

The next 6 helical transmembrane spans lie at 40 to 60 (AFPF…LLLL), 64 to 84 (TDPL…TGAL), 117 to 137 (YGAI…AAII), 142 to 162 (PLAA…AIAW), 188 to 208 (HFAL…PFGL), and 210 to 230 (PLVA…VFIR).

The protein belongs to the CobS family. Requires Mg(2+) as cofactor.

Its subcellular location is the cell inner membrane. It catalyses the reaction alpha-ribazole + adenosylcob(III)inamide-GDP = adenosylcob(III)alamin + GMP + H(+). The catalysed reaction is alpha-ribazole 5'-phosphate + adenosylcob(III)inamide-GDP = adenosylcob(III)alamin 5'-phosphate + GMP + H(+). It functions in the pathway cofactor biosynthesis; adenosylcobalamin biosynthesis; adenosylcobalamin from cob(II)yrinate a,c-diamide: step 7/7. Joins adenosylcobinamide-GDP and alpha-ribazole to generate adenosylcobalamin (Ado-cobalamin). Also synthesizes adenosylcobalamin 5'-phosphate from adenosylcobinamide-GDP and alpha-ribazole 5'-phosphate. This Rhizobium etli (strain ATCC 51251 / DSM 11541 / JCM 21823 / NBRC 15573 / CFN 42) protein is Adenosylcobinamide-GDP ribazoletransferase.